The sequence spans 288 residues: MAGAKEIRNKIGSVKNTQKITGAMEMVAASKMRRAQDRMSASRPYAETMRKVIGHIAQGNLEYKHPYLIEREVKRVGYIVVSTDRGLCGGLNINLFKAALNDMKQWSAKGAKVDLALIGNKASNFFERHGAKVKAHVAGLGDNPSVNDLIGSVKVMLKAYDNGEIDRLYLVYNKFVNTMVQQPRVDQLLPLPVTEDSKLAKKHHWDYLYEPDPKQLLDTLLIRYVESQVYQGVVENLASEQAARMVAMQAATDNAGNLINDLQLVYNKARQASITQELTEIVSGAAAV.

This sequence belongs to the ATPase gamma chain family. F-type ATPases have 2 components, CF(1) - the catalytic core - and CF(0) - the membrane proton channel. CF(1) has five subunits: alpha(3), beta(3), gamma(1), delta(1), epsilon(1). CF(0) has three main subunits: a, b and c.

It is found in the cell inner membrane. Its function is as follows. Produces ATP from ADP in the presence of a proton gradient across the membrane. The gamma chain is believed to be important in regulating ATPase activity and the flow of protons through the CF(0) complex. The chain is ATP synthase gamma chain from Aeromonas hydrophila subsp. hydrophila (strain ATCC 7966 / DSM 30187 / BCRC 13018 / CCUG 14551 / JCM 1027 / KCTC 2358 / NCIMB 9240 / NCTC 8049).